A 93-amino-acid polypeptide reads, in one-letter code: MGAMSPWHWAIVALVVVILFGSKKLPDAARGLGRSLRIFKSEVKEMQNDNSTPAPTAQQSAPAELPVADTTTAPVTPPAPVQPQPQHTEPKSA.

Residues 1–21 (MGAMSPWHWAIVALVVVILFG) form a helical membrane-spanning segment. Positions 44–93 (KEMQNDNSTPAPTAQQSAPAELPVADTTTAPVTPPAPVQPQPQHTEPKSA) are disordered. Low complexity predominate over residues 51–74 (STPAPTAQQSAPAELPVADTTTAP).

It belongs to the TatA/E family. As to quaternary structure, the Tat system comprises two distinct complexes: a TatABC complex, containing multiple copies of TatA, TatB and TatC subunits, and a separate TatA complex, containing only TatA subunits. Substrates initially bind to the TatABC complex, which probably triggers association of the separate TatA complex to form the active translocon.

The protein resides in the cell membrane. Its function is as follows. Part of the twin-arginine translocation (Tat) system that transports large folded proteins containing a characteristic twin-arginine motif in their signal peptide across membranes. TatA could form the protein-conducting channel of the Tat system. The chain is Sec-independent protein translocase protein TatA from Rhodococcus opacus (strain B4).